A 156-amino-acid chain; its full sequence is Small ribosomal subunit protein uS7 (156 aa).

The protein belongs to the universal ribosomal protein uS7 family. Part of the 30S ribosomal subunit. Contacts proteins S9 and S11.

In terms of biological role, one of the primary rRNA binding proteins, it binds directly to 16S rRNA where it nucleates assembly of the head domain of the 30S subunit. Is located at the subunit interface close to the decoding center, probably blocks exit of the E-site tRNA. The protein is Small ribosomal subunit protein uS7 of Synechococcus sp. (strain CC9311).